The primary structure comprises 281 residues: Phosphoglycerate mutase-like protein AT74H (281 aa).

The active-site Tele-phosphohistidine intermediate is His-17. Catalysis depends on Glu-109, which acts as the Proton donor/acceptor.

It belongs to the phosphoglycerate mutase family.

In terms of biological role, may play a role in carbohydrates metabolism. This is Phosphoglycerate mutase-like protein AT74H from Arabidopsis thaliana (Mouse-ear cress).